A 135-amino-acid chain; its full sequence is Unique cartilage matrix-associated protein (135 aa).

A signal peptide spans 1–26; the sequence is MSWTQPALLTCLLVLSAITLFDGADS. Positions 28-61 are cleaved as a propeptide — ucma-N; it reads VSDKRDAVNPQGALRKIFMPEADAASFFKRRSRR. Positions 64–114 form a coiled coil; the sequence is KTQDEINAEQRQRLAADERRREYHEEQRNKYENYAEEENDEQDERTREKTE. Positions 65–96 are enriched in basic and acidic residues; sequence TQDEINAEQRQRLAADERRREYHEEQRNKYEN. The interval 65 to 135 is disordered; sequence TQDEINAEQR…PSYEYNRHTI (71 aa). E68, E72, E81, E85, E88, E89, E95, E99, E100, E104, E107, E111, and E114 each carry 4-carboxyglutamate. Positions 97 to 106 are enriched in acidic residues; sequence YAEEENDEQD. Basic and acidic residues predominate over residues 107–123; that stretch reads ERTREKTEQWREFHYDG.

Belongs to the UCMA family. Proteolytically cleaved by a furin-like convertase to generate a persistent C-terminal fragment found in almost the entire cartilage matrix, and affecting osteoblast differentiation. In terms of processing, sulfated on tyrosine residues.

The protein resides in the secreted. It is found in the extracellular space. Its subcellular location is the extracellular matrix. Its function is as follows. May be involved in the negative control of osteogenic differentiation of osteochondrogenic precursor cells in peripheral zones of fetal cartilage and at the cartilage-bone interface. The sequence is that of Unique cartilage matrix-associated protein (ucma) from Danio rerio (Zebrafish).